A 184-amino-acid polypeptide reads, in one-letter code: Ribosome-recycling factor (184 aa).

The protein belongs to the RRF family.

The protein localises to the cytoplasm. In terms of biological role, responsible for the release of ribosomes from messenger RNA at the termination of protein biosynthesis. May increase the efficiency of translation by recycling ribosomes from one round of translation to another. The sequence is that of Ribosome-recycling factor from Borrelia turicatae (strain 91E135).